The sequence spans 471 residues: Glutamate--tRNA ligase (471 aa).

The 'HIGH' region motif lies at 9–19 (PSPTGYLHVGG). C98, C100, C125, and H127 together coordinate Zn(2+). Residues 237–241 (KLSKR) carry the 'KMSKS' region motif. K240 provides a ligand contact to ATP.

It belongs to the class-I aminoacyl-tRNA synthetase family. Glutamate--tRNA ligase type 1 subfamily. As to quaternary structure, monomer. The cofactor is Zn(2+).

Its subcellular location is the cytoplasm. The enzyme catalyses tRNA(Glu) + L-glutamate + ATP = L-glutamyl-tRNA(Glu) + AMP + diphosphate. Functionally, catalyzes the attachment of glutamate to tRNA(Glu) in a two-step reaction: glutamate is first activated by ATP to form Glu-AMP and then transferred to the acceptor end of tRNA(Glu). The chain is Glutamate--tRNA ligase from Salmonella enteritidis PT4 (strain P125109).